Here is a 142-residue protein sequence, read N- to C-terminus: Large ribosomal subunit protein uL11 (142 aa).

The protein belongs to the universal ribosomal protein uL11 family. Part of the ribosomal stalk of the 50S ribosomal subunit. Interacts with L10 and the large rRNA to form the base of the stalk. L10 forms an elongated spine to which L12 dimers bind in a sequential fashion forming a multimeric L10(L12)X complex. Post-translationally, one or more lysine residues are methylated.

Its function is as follows. Forms part of the ribosomal stalk which helps the ribosome interact with GTP-bound translation factors. The chain is Large ribosomal subunit protein uL11 from Xanthomonas oryzae pv. oryzae (strain MAFF 311018).